The sequence spans 398 residues: Dihydrolipoyllysine-residue acetyltransferase component of acetoin cleaving system (398 aa).

One can recognise a Lipoyl-binding domain in the interval 2–77; the sequence is AVKVVMPKLG…PPGTAICYIG (76 aa). Position 43 is an N6-lipoyllysine (Lys-43). The Peripheral subunit-binding (PSBD) domain occupies 118–155; the sequence is KISPVARKIAEKAGLDLKQLKGTGPGGRIVKDDVTKAL. Residues His-371 and Asp-375 contribute to the active site.

This sequence belongs to the 2-oxoacid dehydrogenase family. (R)-lipoate is required as a cofactor.

It carries out the reaction N(6)-[(R)-dihydrolipoyl]-L-lysyl-[protein] + acetyl-CoA = N(6)-[(R)-S(8)-acetyldihydrolipoyl]-L-lysyl-[protein] + CoA. It functions in the pathway ketone degradation; acetoin degradation. In Bacillus subtilis (strain 168), this protein is Dihydrolipoyllysine-residue acetyltransferase component of acetoin cleaving system (acoC).